The chain runs to 346 residues: uncharacterized protein (346 aa).

Residues 321–346 (TPWGTHSVAGVGPPPYARSGPASATT) are disordered.

This is an uncharacterized protein from Mycobacterium tuberculosis (strain CDC 1551 / Oshkosh).